The primary structure comprises 721 residues: Peroxisomal fatty acid beta-oxidation multifunctional protein AIM1 (721 aa).

Glu116 (nucleophile) is an active-site residue. Glu136 functions as the Proton acceptor in the catalytic mechanism. A Microbody targeting signal motif is present at residues 719-721 (SKL).

In the N-terminal section; belongs to the enoyl-CoA hydratase/isomerase family. It in the central section; belongs to the 3-hydroxyacyl-CoA dehydrogenase family. Widely expressed.

It is found in the peroxisome. The enzyme catalyses a (3S)-3-hydroxyacyl-CoA = a (2E)-enoyl-CoA + H2O. The catalysed reaction is a 4-saturated-(3S)-3-hydroxyacyl-CoA = a (3E)-enoyl-CoA + H2O. It carries out the reaction (3S)-3-hydroxybutanoyl-CoA = (2E)-butenoyl-CoA + H2O. It catalyses the reaction (3S)-hydroxyoctanoyl-CoA = (2E)-octenoyl-CoA + H2O. The enzyme catalyses (3S)-3-hydroxydodecanoyl-CoA = (2E)-dodecenoyl-CoA + H2O. The catalysed reaction is (3S)-hydroxytetradecanoyl-CoA = (2E)-tetradecenoyl-CoA + H2O. It carries out the reaction (3S)-hydroxyhexanoyl-CoA = (2E)-hexenoyl-CoA + H2O. It catalyses the reaction a (3Z)-enoyl-CoA = a 4-saturated (2E)-enoyl-CoA. The enzyme catalyses a (3E)-enoyl-CoA = a 4-saturated (2E)-enoyl-CoA. The catalysed reaction is (3S)-3-hydroxybutanoyl-CoA = (3R)-3-hydroxybutanoyl-CoA. It carries out the reaction a (3S)-3-hydroxyacyl-CoA + NAD(+) = a 3-oxoacyl-CoA + NADH + H(+). It catalyses the reaction (3S)-3-hydroxybutanoyl-CoA + NAD(+) = acetoacetyl-CoA + NADH + H(+). The enzyme catalyses (3S)-hydroxyhexanoyl-CoA + NAD(+) = 3-oxohexanoyl-CoA + NADH + H(+). The catalysed reaction is (3S)-hydroxyoctanoyl-CoA + NAD(+) = 3-oxooctanoyl-CoA + NADH + H(+). It carries out the reaction (3S)-3-hydroxydodecanoyl-CoA + NAD(+) = 3-oxododecanoyl-CoA + NADH + H(+). It catalyses the reaction (3S)-hydroxytetradecanoyl-CoA + NAD(+) = 3-oxotetradecanoyl-CoA + NADH + H(+). It functions in the pathway lipid metabolism; fatty acid beta-oxidation. Its function is as follows. Involved in peroxisomal fatty acid beta-oxidation. Required for wound-induced jasmonate biosynthesis. Possesses enoyl-CoA hydratase activity against short chain substrates (C4-C6) and 3-hydroxyacyl-CoA dehydrogenase activity against chains of variable sizes (C6-C16). Possesses cinnamoyl-CoA hydratase activity and is involved in the peroxisomal beta-oxidation pathway for the biosynthesis of benzoic acid (BA). Required for the accumulation in seeds of benzoylated glucosinolates (BGs) and substituted hydroxybenzoylated choline esters, which are BA-containing secondary metabolites. Required for salicylic acid (SA) in seeds. This Arabidopsis thaliana (Mouse-ear cress) protein is Peroxisomal fatty acid beta-oxidation multifunctional protein AIM1 (AIM1).